Reading from the N-terminus, the 275-residue chain is Phosphate import ATP-binding protein PstB (275 aa).

One can recognise an ABC transporter domain in the interval 29 to 270 (LEIKDLDLYY…PNKKKTEDYI (242 aa)). 61–68 (GPSGCGKS) provides a ligand contact to ATP.

This sequence belongs to the ABC transporter superfamily. Phosphate importer (TC 3.A.1.7) family. In terms of assembly, the complex is composed of two ATP-binding proteins (PstB), two transmembrane proteins (PstC and PstA) and a solute-binding protein (PstS).

The protein localises to the cell inner membrane. It carries out the reaction phosphate(out) + ATP + H2O = ADP + 2 phosphate(in) + H(+). Part of the ABC transporter complex PstSACB involved in phosphate import. Responsible for energy coupling to the transport system. The polypeptide is Phosphate import ATP-binding protein PstB (Pseudoalteromonas translucida (strain TAC 125)).